The sequence spans 128 residues: Glycophorin-C (128 aa).

Residues 1-12 (MWSTRSPNSTAW) are compositionally biased toward polar residues. The segment at 1–48 (MWSTRSPNSTAWPLSLEPDPGMASASTTMHTTTIAEPDPGMSGWPDGR) is disordered. Topologically, residues 1 to 57 (MWSTRSPNSTAWPLSLEPDPGMASASTTMHTTTIAEPDPGMSGWPDGRMETSTPTIM) are extracellular. The O-linked (GalNAc...) serine glycan is linked to Ser-3. The O-linked (GalNAc...) threonine glycan is linked to Thr-4. Ser-6 carries an O-linked (GalNAc...) serine glycan. An N-linked (GlcNAc...) asparagine glycan is attached at Asn-8. O-linked (GalNAc...) serine glycosylation is present at Ser-9. Thr-10 is a glycosylation site (O-linked (GalNAc...) threonine). Residues Ser-15, Ser-24, and Ser-26 are each glycosylated (O-linked (GalNAc...) serine). The segment covering 22–33 (MASASTTMHTTT) has biased composition (low complexity). Residues Thr-27, Thr-28, Thr-31, Thr-32, and Thr-33 are each glycosylated (O-linked (GalNAc...) threonine). O-linked (GalNAc...) serine glycosylation occurs at Ser-42. The chain crosses the membrane as a helical; Signal-anchor for type III membrane protein span at residues 58–81 (DIVVIAGVIAAVAIVLVSLLFVML). The Cytoplasmic segment spans residues 82–128 (RYMYRHKGTYHTNEAKGTEFAESADAALQGDPALQDAGDSSRKEYFI). Ser-104 and Ser-122 each carry phosphoserine. The tract at residues 108–128 (ALQGDPALQDAGDSSRKEYFI) is disordered.

Belongs to the glycophorin-C family. O-glycosylated with core 1 or possibly core 8 glycans. As to expression, glycophorin-C is expressed in erythrocytes. Glycophorin-D and IsoGPC are ubiquitously expressed.

It localises to the cell membrane. Functionally, this protein is a minor sialoglycoprotein in human erythrocyte membranes. The blood group Gerbich antigens and receptors for Plasmodium falciparum merozoites are most likely located within the extracellular domain. Glycophorin-C plays an important role in regulating the stability of red cells. This Homo sapiens (Human) protein is Glycophorin-C (GYPC).